Consider the following 59-residue polypeptide: uncharacterized protein (59 aa).

A helical transmembrane segment spans residues 6–26; the sequence is WWLVVFAVFVFLFDTLLMQWI.

It is found in the membrane. This is an uncharacterized protein from Escherichia coli O157:H7.